A 234-amino-acid polypeptide reads, in one-letter code: HTH-type transcriptional repressor FabR (234 aa).

Positions 29–89 constitute an HTH tetR-type domain; sequence KTRRSLVEAA…TMVDESGLML (61 aa). The segment at residues 52 to 71 is a DNA-binding region (H-T-H motif); the sequence is SLREVAREAGIAPTSFYRHF.

Homodimer.

The protein resides in the cytoplasm. With respect to regulation, has been suggested to require either an unsaturated acyl carrier protein or unsaturated acyl-CoA (but not their saturated equivalents) for DNA-binding. Another group suggests that unsaturated thioesters are not essential but act instead to enhance DNA-binding. In terms of biological role, binds the promoter region of at least fabA and fabB, but probably not yqfA. Represses the transcription of fabA and fabB, involved in unsaturated fatty acid (UFA) biosynthesis. By controlling UFA production, FabR directly influences the physical properties of the membrane bilayer. This is HTH-type transcriptional repressor FabR from Escherichia coli (strain K12).